Here is a 798-residue protein sequence, read N- to C-terminus: MAHYPVFTVGLLTCLVLCINAQQGGTECLKANAKSCGECIQAGPNCGWCTKVDFLQEGEPTSARCDDLAALKSKGCPEDDIQNPRGRKQKLKDIPITSKGKGERMDPANITQLRPQQMVFELRSGEPQTFNLTFRRAEDYPIDLYYLMDLSFSMKDDLENVKSLGTALMTEMEKITSDFRIGFGSFVEKTVMPYISTTPAKLINPCTSDQNCTSPFSYKNVLNLTKDGKLFNDLVGKQQISGNLDSPEGGFDAIMQVAVCGEQIGWRNVTRLLVFSTDAGFHFAGDGKLGGIVLPNDGKCHLHENMYTMSHYYDYPSIAHLVQKLSENNIQTIFAVTEDFQPVYQELKNLIPKSAVGTLSSNSSNVIQLIIDSYNSLSSELILENSKLPEGVTISYKSFCKNGVKGTGEDGRKCSNISIGDQVEFEISVTAHKCPKKGQAESIKIKPLGFNEEVEIILQFLCECDCQDKGTPNSPECHFGNGTFECGACRCNDGRIGKECECSTDEVNSEDMDAYCRRENSSEICSNNGDCICGQCVCKKRDNPNEVYSGKYCECDNFNCDRSNGLICGGKGICKCRVCECFPNYSGSACDCSEDTSTCMAKNGQICNGRGICDCGRCKCTDPKFQGPTCELCQTCVGVCAEHKECVQCRAFQKGEKQDVCMEQCMHFNISLVDSREELPQPGQAEALTHCKEKDAEDCWFYFTYSVDSKNEVMVHVVKEPECPSGPDIIPIVAGVVAGIVLIGLALLLIWKLLMIIHDRREFAKFEKEKMNAKWDTGENPIYKSAVTTVVNPKYEGK.

A signal peptide spans 1–21 (MAHYPVFTVGLLTCLVLCINA). The Extracellular portion of the chain corresponds to 22 to 727 (QQGGTECLKA…VKEPECPSGP (706 aa)). Residues 27–77 (ECLKANAKSCGECIQAGPNCGWCTKVDFLQEGEPTSARCDDLAALKSKGCP) form the PSI domain. Disulfide bonds link Cys-28/Cys-46, Cys-36/Cys-464, Cys-39/Cys-65, Cys-49/Cys-76, Cys-206/Cys-212, Cys-260/Cys-300, Cys-400/Cys-414, Cys-434/Cys-462, Cys-466/Cys-486, Cys-477/Cys-489, Cys-491/Cys-500, Cys-502/Cys-533, Cys-516/Cys-531, Cys-525/Cys-536, Cys-538/Cys-553, Cys-555/Cys-576, Cys-560/Cys-574, Cys-568/Cys-579, Cys-581/Cys-590, Cys-592/Cys-615, Cys-599/Cys-613, Cys-607/Cys-618, Cys-620/Cys-630, Cys-633/Cys-636, Cys-640/Cys-691, Cys-646/Cys-665, Cys-649/Cys-661, and Cys-699/Cys-723. The disordered stretch occupies residues 76-106 (CPEDDIQNPRGRKQKLKDIPITSKGKGERMD). 2 N-linked (GlcNAc...) asparagine glycosylation sites follow: Asn-109 and Asn-131. Residues 139–377 (DYPIDLYYLM…QLIIDSYNSL (239 aa)) enclose the VWFA domain. 2 residues coordinate Mg(2+): Ser-151 and Ser-153. Residues Ser-153, Asp-156, Asp-157, and Glu-188 each contribute to the Ca(2+) site. Asn-211 and Asn-223 each carry an N-linked (GlcNAc...) asparagine glycan. Ca(2+) is bound by residues Asn-243, Asp-245, Pro-247, and Glu-248. Glu-248 contributes to the Mg(2+) binding site. N-linked (GlcNAc...) asparagine glycans are attached at residues Asn-268 and Asn-362. An N-linked (GlcNAc...) asparagine glycan is attached at Asn-416. 4 consecutive I-EGF domains span residues 466 to 501 (CQDK…KECE), 502 to 554 (CSTD…KYCE), 555 to 591 (CDNF…SACD), and 592 to 631 (CSED…PTCE). Asn-481 carries N-linked (GlcNAc...) asparagine glycosylation. A glycan (N-linked (GlcNAc...) asparagine) is linked at Asn-520. A glycan (N-linked (GlcNAc...) asparagine) is linked at Asn-584. N-linked (GlcNAc...) asparagine glycosylation occurs at Asn-669. Residues 728-751 (DIIPIVAGVVAGIVLIGLALLLIW) form a helical membrane-spanning segment. Residues 752 to 798 (KLLMIIHDRREFAKFEKEKMNAKWDTGENPIYKSAVTTVVNPKYEGK) are Cytoplasmic-facing. The residue at position 783 (Tyr-783) is a Phosphotyrosine.

It belongs to the integrin beta chain family. Heterodimer of an alpha and a beta subunit.

The protein localises to the cell membrane. Its subcellular location is the cell projection. It localises to the invadopodium membrane. It is found in the ruffle membrane. The protein resides in the melanosome. The protein localises to the cleavage furrow. Its subcellular location is the lamellipodium. It localises to the ruffle. Functionally, beta integrins associate with alpha subunits to form receptor complexes that recognize the sequence R-G-D in a wide array of ligands. May be involved in osteoblast compaction. May play role in myoblast differentiation and fusion during skeletal myogenesis. In Xenopus laevis (African clawed frog), this protein is Integrin beta-1-A (itgb1-a).